The following is a 399-amino-acid chain: Elongation factor Tu (399 aa).

The region spanning 10-204 (KPHVNIGTIG…AVDASIPEPE (195 aa)) is the tr-type G domain. A G1 region spans residues 19–26 (GHVDHGKT). 19–26 (GHVDHGKT) contributes to the GTP binding site. A Mg(2+)-binding site is contributed by threonine 26. The interval 60–64 (GITIN) is G2. Positions 81-84 (DCPG) are G3. Residues 81–85 (DCPGH) and 136–139 (NKCD) each bind GTP. Residues 136-139 (NKCD) form a G4 region. The G5 stretch occupies residues 174–176 (SGL).

It belongs to the TRAFAC class translation factor GTPase superfamily. Classic translation factor GTPase family. EF-Tu/EF-1A subfamily. In terms of assembly, monomer.

The protein localises to the cytoplasm. The enzyme catalyses GTP + H2O = GDP + phosphate + H(+). Its function is as follows. GTP hydrolase that promotes the GTP-dependent binding of aminoacyl-tRNA to the A-site of ribosomes during protein biosynthesis. In Synechococcus sp. (strain CC9902), this protein is Elongation factor Tu.